Reading from the N-terminus, the 90-residue chain is DNA-directed RNA polymerase subunit omega (90 aa).

Belongs to the RNA polymerase subunit omega family. As to quaternary structure, the RNAP catalytic core consists of 2 alpha, 1 beta, 1 beta' and 1 omega subunit. When a sigma factor is associated with the core the holoenzyme is formed, which can initiate transcription.

It carries out the reaction RNA(n) + a ribonucleoside 5'-triphosphate = RNA(n+1) + diphosphate. Its function is as follows. Promotes RNA polymerase assembly. Latches the N- and C-terminal regions of the beta' subunit thereby facilitating its interaction with the beta and alpha subunits. In Hamiltonella defensa subsp. Acyrthosiphon pisum (strain 5AT), this protein is DNA-directed RNA polymerase subunit omega.